The following is a 417-amino-acid chain: Adrenocortical dysplasia protein homolog (417 aa).

The PWI motif lies at 11 to 13 (PWI). Serine 25 carries the phosphoserine modification. The interaction with POT1 stretch occupies residues 156 to 245 (ESASSSAGLT…SSIDSSQKAQ (90 aa)). 2 stretches are compositionally biased toward polar residues: residues 237–250 (SIDSSQKAQENPAS) and 259–292 (SGASVSLLSALPTSDPGQKDNSQPPPTVCSTSPR). Residues 237-309 (SIDSSQKAQE…PCSSTPSSPL (73 aa)) form a disordered region. Low complexity predominate over residues 296-309 (PSSTPCSSTPSSPL). Residues serine 313 and serine 317 each carry the phosphoserine modification. Residue lysine 348 forms a Glycyl lysine isopeptide (Lys-Gly) (interchain with G-Cter in SUMO2) linkage.

Component of the shelterin complex (telosome) composed of TERF1, TERF2, TINF2, TERF2IP ACD and POT1. Forms heterodimers with POT1. Identified in a complex with POT1 and single-stranded telomeric DNA. Interacts with STN1 and TINF2.

It is found in the nucleus. The protein localises to the chromosome. Its subcellular location is the telomere. Its function is as follows. Component of the shelterin complex (telosome) that is involved in the regulation of telomere length and protection. Shelterin associates with arrays of double-stranded TTAGGG repeats added by telomerase and protects chromosome ends. Without its protective activity, telomeres are no longer hidden from the DNA damage surveillance and chromosome ends are inappropriately processed by DNA repair pathways. Promotes binding of POT1 to single-stranded telomeric DNA. Modulates the inhibitory effects of POT1 on telomere elongation. The ACD-POT1 heterodimer enhances telomere elongation by recruiting telomerase to telomeres and increasing its processivity. May play a role in organogenesis. The protein is Adrenocortical dysplasia protein homolog of Rattus norvegicus (Rat).